Here is a 158-residue protein sequence, read N- to C-terminus: Large ribosomal subunit protein uL22 (158 aa).

This sequence belongs to the universal ribosomal protein uL22 family. As to quaternary structure, part of the 50S ribosomal subunit.

Its function is as follows. This protein binds specifically to 23S rRNA. It makes multiple contacts with different domains of the 23S rRNA in the assembled 50S subunit and ribosome. The globular domain of the protein is located near the polypeptide exit tunnel on the outside of the subunit, while an extended beta-hairpin is found that lines the wall of the exit tunnel in the center of the 70S ribosome. This Haloquadratum walsbyi (strain DSM 16790 / HBSQ001) protein is Large ribosomal subunit protein uL22.